A 244-amino-acid polypeptide reads, in one-letter code: 3-deoxy-manno-octulosonate cytidylyltransferase (244 aa).

It belongs to the KdsB family.

It is found in the cytoplasm. The catalysed reaction is 3-deoxy-alpha-D-manno-oct-2-ulosonate + CTP = CMP-3-deoxy-beta-D-manno-octulosonate + diphosphate. It participates in nucleotide-sugar biosynthesis; CMP-3-deoxy-D-manno-octulosonate biosynthesis; CMP-3-deoxy-D-manno-octulosonate from 3-deoxy-D-manno-octulosonate and CTP: step 1/1. Its pathway is bacterial outer membrane biogenesis; lipopolysaccharide biosynthesis. Activates KDO (a required 8-carbon sugar) for incorporation into bacterial lipopolysaccharide in Gram-negative bacteria. The sequence is that of 3-deoxy-manno-octulosonate cytidylyltransferase from Synechococcus elongatus (strain ATCC 33912 / PCC 7942 / FACHB-805) (Anacystis nidulans R2).